The sequence spans 333 residues: FAD-dependent monooxygenase pytG (333 aa).

Residues 6–26 form a helical membrane-spanning segment; sequence LPNVSVAIIGAGIGGLTLGAF. E38 and R109 together coordinate FAD. A glycan (N-linked (GlcNAc...) asparagine) is linked at N303.

Belongs to the paxM FAD-dependent monooxygenase family. The cofactor is FAD.

It localises to the membrane. It functions in the pathway secondary metabolite biosynthesis. In terms of biological role, FAD-dependent monooxygenase; part of the gene cluster that mediates the biosynthesis of pyranterreones, a family of antioxidative compounds. The first step of pyranonigrins biosynthesis is performed by the hybrid PKS-NRPS synthetase pytA that condenses 4 malonyl-CoA units ato the acetyl starter unit by the modular PKS of pytA. The acyl chain is then connected to an L-serine through the amide bond by the modular NRPS of pytA. A tetramic acid is formed and released from the PKS-NRPS pytA to give pyranterreone 5 with the help of the thioesterase pytI. Pyranterreone 5 could be methylated by pytC to afford pyranterreone 6. Both pyranterreones 5 and 6 are subsequently oxidized by the FAD-linked oxidoreductase pytB and the cytochrome P450 monooxygenase pytD to form the fused gamma-pyrone core, resulting in pyranterreones 7 and 11, respectively. The hydroxy group at C-8 of pyranterreones 7 and 11 are dehydrated by the aspartyl protease pytH to form a delta-7 double bond to give pyranterreones 3 and 1, 2 accordingly. The exo-methylene of pyranterreone 3 could be reduced into a pendant methyl by reductase pytE to provide pyranterreone 4, also known as cordylactam. Pyranterreone 4 can be reconverted to pyranterreone 3 through pytB-catalyzed dehydrogenation or further oxidized to pyranterreones 9 and 10. The sequence is that of FAD-dependent monooxygenase pytG from Aspergillus terreus (strain NIH 2624 / FGSC A1156).